A 262-amino-acid chain; its full sequence is Shikimate dehydrogenase (NADP(+)) (262 aa).

Shikimate is bound by residues 15 to 17 and T62; that span reads SRS. Catalysis depends on K66, which acts as the Proton acceptor. E78 is an NADP(+) binding site. Positions 87 and 102 each coordinate shikimate. Residues 126–130, 150–155, and M214 contribute to the NADP(+) site; these read GAGGA and NRTLAR. Y216 is a shikimate binding site. G236 contacts NADP(+).

This sequence belongs to the shikimate dehydrogenase family. As to quaternary structure, homodimer.

It carries out the reaction shikimate + NADP(+) = 3-dehydroshikimate + NADPH + H(+). Its pathway is metabolic intermediate biosynthesis; chorismate biosynthesis; chorismate from D-erythrose 4-phosphate and phosphoenolpyruvate: step 4/7. Functionally, involved in the biosynthesis of the chorismate, which leads to the biosynthesis of aromatic amino acids. Catalyzes the reversible NADPH linked reduction of 3-dehydroshikimate (DHSA) to yield shikimate (SA). This chain is Shikimate dehydrogenase (NADP(+)), found in Acinetobacter baumannii (strain ACICU).